Consider the following 205-residue polypeptide: uncharacterized protein (205 aa).

The 61-residue stretch at aspartate 11 to glycine 71 folds into the HTH tetR-type domain. A DNA-binding region (H-T-H motif) is located at residues threonine 34–phenylalanine 53.

This is an uncharacterized protein from Bacillus subtilis (strain 168).